Here is a 511-residue protein sequence, read N- to C-terminus: Bifunctional purine biosynthesis protein PurH (511 aa).

Residues 1–145 (MKKRALVSVS…KNHKFVSVIV (145 aa)) enclose the MGS-like domain.

This sequence belongs to the PurH family.

The catalysed reaction is (6R)-10-formyltetrahydrofolate + 5-amino-1-(5-phospho-beta-D-ribosyl)imidazole-4-carboxamide = 5-formamido-1-(5-phospho-D-ribosyl)imidazole-4-carboxamide + (6S)-5,6,7,8-tetrahydrofolate. It catalyses the reaction IMP + H2O = 5-formamido-1-(5-phospho-D-ribosyl)imidazole-4-carboxamide. Its pathway is purine metabolism; IMP biosynthesis via de novo pathway; 5-formamido-1-(5-phospho-D-ribosyl)imidazole-4-carboxamide from 5-amino-1-(5-phospho-D-ribosyl)imidazole-4-carboxamide (10-formyl THF route): step 1/1. The protein operates within purine metabolism; IMP biosynthesis via de novo pathway; IMP from 5-formamido-1-(5-phospho-D-ribosyl)imidazole-4-carboxamide: step 1/1. The chain is Bifunctional purine biosynthesis protein PurH from Bacillus cereus (strain B4264).